The chain runs to 340 residues: Biotin synthase (340 aa).

In terms of domain architecture, Radical SAM core spans 47–269 (SELQLSQLLS…VAVARIVCPK (223 aa)). 3 residues coordinate [4Fe-4S] cluster: Cys62, Cys66, and Cys69. The [2Fe-2S] cluster site is built by Cys106, Cys137, Cys197, and Arg273.

Belongs to the radical SAM superfamily. Biotin synthase family. In terms of assembly, homodimer. Requires [4Fe-4S] cluster as cofactor. [2Fe-2S] cluster is required as a cofactor.

The enzyme catalyses (4R,5S)-dethiobiotin + (sulfur carrier)-SH + 2 reduced [2Fe-2S]-[ferredoxin] + 2 S-adenosyl-L-methionine = (sulfur carrier)-H + biotin + 2 5'-deoxyadenosine + 2 L-methionine + 2 oxidized [2Fe-2S]-[ferredoxin]. The protein operates within cofactor biosynthesis; biotin biosynthesis; biotin from 7,8-diaminononanoate: step 2/2. Its function is as follows. Catalyzes the conversion of dethiobiotin (DTB) to biotin by the insertion of a sulfur atom into dethiobiotin via a radical-based mechanism. The sequence is that of Biotin synthase from Caulobacter sp. (strain K31).